The chain runs to 370 residues: Anhydro-N-acetylmuramic acid kinase (370 aa).

Position 13–20 (Gly13–Asp20) interacts with ATP.

This sequence belongs to the anhydro-N-acetylmuramic acid kinase family.

It carries out the reaction 1,6-anhydro-N-acetyl-beta-muramate + ATP + H2O = N-acetyl-D-muramate 6-phosphate + ADP + H(+). The protein operates within amino-sugar metabolism; 1,6-anhydro-N-acetylmuramate degradation. It participates in cell wall biogenesis; peptidoglycan recycling. Catalyzes the specific phosphorylation of 1,6-anhydro-N-acetylmuramic acid (anhMurNAc) with the simultaneous cleavage of the 1,6-anhydro ring, generating MurNAc-6-P. Is required for the utilization of anhMurNAc either imported from the medium or derived from its own cell wall murein, and thus plays a role in cell wall recycling. This Rhizobium etli (strain ATCC 51251 / DSM 11541 / JCM 21823 / NBRC 15573 / CFN 42) protein is Anhydro-N-acetylmuramic acid kinase.